Consider the following 308-residue polypeptide: GATA transcription factor 9 (308 aa).

A disordered region spans residues 34-57; that stretch reads DDGLNTLPDSSTLSTGTLTDSSNS. The segment covering 39–57 has biased composition (low complexity); sequence TLPDSSTLSTGTLTDSSNS. The Nuclear localization signal signature appears at 142 to 149; the sequence is KARSKRSR. Residues 193-247 form a GATA-type zinc finger; it reads SGGGRRCLHCATEKTPQWRTGPMGPKTLCNACGVRYKSGRLVPEYRPASSPTFVM.

This sequence belongs to the type IV zinc-finger family. Class A subfamily.

The protein localises to the nucleus. In terms of biological role, transcriptional activator that specifically binds 5'-GATA-3' or 5'-GAT-3' motifs within gene promoters. May be involved in the regulation of some light-responsive genes. The sequence is that of GATA transcription factor 9 (GATA9) from Arabidopsis thaliana (Mouse-ear cress).